We begin with the raw amino-acid sequence, 185 residues long: ATP synthase subunit delta (185 aa).

It belongs to the ATPase delta chain family. In terms of assembly, F-type ATPases have 2 components, F(1) - the catalytic core - and F(0) - the membrane proton channel. F(1) has five subunits: alpha(3), beta(3), gamma(1), delta(1), epsilon(1). F(0) has three main subunits: a(1), b(2) and c(10-14). The alpha and beta chains form an alternating ring which encloses part of the gamma chain. F(1) is attached to F(0) by a central stalk formed by the gamma and epsilon chains, while a peripheral stalk is formed by the delta and b chains.

The protein resides in the cell inner membrane. F(1)F(0) ATP synthase produces ATP from ADP in the presence of a proton or sodium gradient. F-type ATPases consist of two structural domains, F(1) containing the extramembraneous catalytic core and F(0) containing the membrane proton channel, linked together by a central stalk and a peripheral stalk. During catalysis, ATP synthesis in the catalytic domain of F(1) is coupled via a rotary mechanism of the central stalk subunits to proton translocation. In terms of biological role, this protein is part of the stalk that links CF(0) to CF(1). It either transmits conformational changes from CF(0) to CF(1) or is implicated in proton conduction. The polypeptide is ATP synthase subunit delta (Gemmatimonas aurantiaca (strain DSM 14586 / JCM 11422 / NBRC 100505 / T-27)).